Reading from the N-terminus, the 124-residue chain is Large ribosomal subunit protein uL18 (124 aa).

The protein belongs to the universal ribosomal protein uL18 family. As to quaternary structure, part of the 50S ribosomal subunit; part of the 5S rRNA/L5/L18/L25 subcomplex. Contacts the 5S and 23S rRNAs.

Its function is as follows. This is one of the proteins that bind and probably mediate the attachment of the 5S RNA into the large ribosomal subunit, where it forms part of the central protuberance. The protein is Large ribosomal subunit protein uL18 of Thermomicrobium roseum (strain ATCC 27502 / DSM 5159 / P-2).